Here is a 459-residue protein sequence, read N- to C-terminus: XK-related protein 3 (459 aa).

A run of 10 helical transmembrane segments spans residues 35–55, 68–88, 97–117, 169–189, 199–219, 238–258, 264–284, 300–320, 345–365, and 377–397; these read FSII…LYMF, SFTI…LMFF, AALL…LHTI, IQAF…SLTI, LMTF…ILAI, VVMW…FFIA, SLPV…LEFW, MVGT…INFS, ILHY…FRFF, and LIAV…LLFY.

The protein belongs to the XK family. Expressed predominantly, if not exclusively, in testis.

It is found in the cell membrane. This is XK-related protein 3 (XKR3) from Homo sapiens (Human).